A 220-amino-acid polypeptide reads, in one-letter code: Ribose-5-phosphate isomerase A (220 aa).

Residues 28–31 (TGST), 81–84 (DGAD), and 94–97 (KGGG) contribute to the substrate site. The active-site Proton acceptor is glutamate 103. Lysine 121 contacts substrate.

It belongs to the ribose 5-phosphate isomerase family. As to quaternary structure, homodimer.

It catalyses the reaction aldehydo-D-ribose 5-phosphate = D-ribulose 5-phosphate. Its pathway is carbohydrate degradation; pentose phosphate pathway; D-ribose 5-phosphate from D-ribulose 5-phosphate (non-oxidative stage): step 1/1. Its function is as follows. Catalyzes the reversible conversion of ribose-5-phosphate to ribulose 5-phosphate. The chain is Ribose-5-phosphate isomerase A from Shewanella sp. (strain W3-18-1).